A 146-amino-acid polypeptide reads, in one-letter code: Protein US8.5 (146 aa).

Residues 63 to 93 (LIAIADARGDPPETLPPGAGGAAPACRRPPR) are disordered. The segment covering 84 to 93 (AAPACRRPPR) has biased composition (low complexity).

Belongs to the HHV-1 US8.5 protein family. Phosphorylated.

It is found in the host nucleus. The protein resides in the host nucleolus. The sequence is that of Protein US8.5 from Human herpesvirus 2 (strain HG52) (HHV-2).